Here is a 672-residue protein sequence, read N- to C-terminus: tRNA 5-methylaminomethyl-2-thiouridine biosynthesis bifunctional protein MnmC (672 aa).

Residues 1–241 form a tRNA (mnm(5)s(2)U34)-methyltransferase region; sequence MHKVQFADVH…KRECLQGVKA (241 aa). The interval 269–672 is FAD-dependent cmnm(5)s(2)U34 oxidoreductase; the sequence is IGGGIASVFS…LLKGSQVKQG (404 aa).

This sequence in the N-terminal section; belongs to the methyltransferase superfamily. tRNA (mnm(5)s(2)U34)-methyltransferase family. In the C-terminal section; belongs to the DAO family. Requires FAD as cofactor.

Its subcellular location is the cytoplasm. The catalysed reaction is 5-aminomethyl-2-thiouridine(34) in tRNA + S-adenosyl-L-methionine = 5-methylaminomethyl-2-thiouridine(34) in tRNA + S-adenosyl-L-homocysteine + H(+). Its function is as follows. Catalyzes the last two steps in the biosynthesis of 5-methylaminomethyl-2-thiouridine (mnm(5)s(2)U) at the wobble position (U34) in tRNA. Catalyzes the FAD-dependent demodification of cmnm(5)s(2)U34 to nm(5)s(2)U34, followed by the transfer of a methyl group from S-adenosyl-L-methionine to nm(5)s(2)U34, to form mnm(5)s(2)U34. The polypeptide is tRNA 5-methylaminomethyl-2-thiouridine biosynthesis bifunctional protein MnmC (Pasteurella multocida (strain Pm70)).